The primary structure comprises 333 residues: uncharacterized protein (333 aa).

The protein to bacterial alkanal monooxygenase alpha and beta chains.

This is an uncharacterized protein from Bacillus subtilis (strain 168).